The following is a 158-amino-acid chain: Putative ribonucleoside-diphosphate reductase small chain B (158 aa).

This sequence belongs to the ribonucleoside diphosphate reductase small chain family.

This Arabidopsis thaliana (Mouse-ear cress) protein is Putative ribonucleoside-diphosphate reductase small chain B (RNR2B).